We begin with the raw amino-acid sequence, 104 residues long: PTS system lactose-specific EIIA component (104 aa).

One can recognise a PTS EIIA type-3 domain in the interval 1–102; that stretch reads MNRDEVQLLG…MKHLIELYKK (102 aa). His78 serves as the catalytic Tele-phosphohistidine intermediate. His78 bears the Phosphohistidine; by HPr mark. Asp81 lines the Mg(2+) pocket.

As to quaternary structure, homotrimer. Mg(2+) is required as a cofactor.

It localises to the cytoplasm. Functionally, the phosphoenolpyruvate-dependent sugar phosphotransferase system (sugar PTS), a major carbohydrate active transport system, catalyzes the phosphorylation of incoming sugar substrates concomitantly with their translocation across the cell membrane. The enzyme II LacEF PTS system is involved in lactose transport. The protein is PTS system lactose-specific EIIA component of Staphylococcus epidermidis (strain ATCC 35984 / DSM 28319 / BCRC 17069 / CCUG 31568 / BM 3577 / RP62A).